The chain runs to 452 residues: 2-succinylbenzoate--CoA ligase (452 aa).

The protein belongs to the ATP-dependent AMP-binding enzyme family. MenE subfamily.

The enzyme catalyses 2-succinylbenzoate + ATP + CoA = 2-succinylbenzoyl-CoA + AMP + diphosphate. Its pathway is quinol/quinone metabolism; 1,4-dihydroxy-2-naphthoate biosynthesis; 1,4-dihydroxy-2-naphthoate from chorismate: step 5/7. The protein operates within quinol/quinone metabolism; menaquinone biosynthesis. In terms of biological role, converts 2-succinylbenzoate (OSB) to 2-succinylbenzoyl-CoA (OSB-CoA). This chain is 2-succinylbenzoate--CoA ligase, found in Haemophilus influenzae (strain ATCC 51907 / DSM 11121 / KW20 / Rd).